The primary structure comprises 360 residues: MSGQQTTTHQPWPGVIAAYRDRLPVGDDWTPVTLLEGGTPLIAAPRLSEQTGCTIHLKVEGLNPTGSFKDRGMTMAVTDALARGQRAVLCASTGNTSASAAAYAARAGITCAVLIPQGKIAMGKLAQAVMHGAKIIQIDGNFDDCLELARKMAADFPMISLVNSVNPVRIEGQKTAVFEIVDALGTAPHVHALPVGNAGNITAYWKGYTEYHADGLIDRLPRMLGTQAAGAAPLVLGEPVSHPETIATAIRIGSPASWTSAVEAQQQSKGRFLAATDEEILAAYHLVARAEGVFVEPASAASIAGLLKAIDGGWVARGSTVVCTITGNGLKDPDTALKDMPSVSPVPVDAVAVVEQLGLV.

Lysine 69 is modified (N6-(pyridoxal phosphate)lysine). Residues asparagine 95, 196 to 200, and threonine 326 contribute to the pyridoxal 5'-phosphate site; that span reads GNAGN.

It belongs to the threonine synthase family. As to quaternary structure, homodimer. Pyridoxal 5'-phosphate serves as cofactor.

It carries out the reaction O-phospho-L-homoserine + H2O = L-threonine + phosphate. The protein operates within amino-acid biosynthesis; L-threonine biosynthesis; L-threonine from L-aspartate: step 5/5. In terms of biological role, catalyzes the gamma-elimination of phosphate from L-phosphohomoserine and the beta-addition of water to produce L-threonine. This chain is Threonine synthase (thrC), found in Mycobacterium leprae (strain TN).